A 408-amino-acid chain; its full sequence is UDP-N-acetylglucosamine--dolichyl-phosphate N-acetylglucosaminephosphotransferase (408 aa).

The Lumenal segment spans residues 1-10 (MWAFPELPLP). A helical transmembrane segment spans residues 11–38 (LLVNLFGSLLGFVATVTLIPAFRSHFIA). Topologically, residues 39–58 (ARLCGQDLNKLSRQQIPESQ) are cytoplasmic. Residues 44–46 (QDL) and Glu-56 contribute to the UDP-N-acetyl-alpha-D-glucosamine site. Residues 59-78 (GVICGAVFLIILFCFIPFPF) traverse the membrane as a helical segment. Residues 79-91 (LNCFVEEQCKAFP) are Lumenal-facing. Residues 92–118 (HHEFVALIGALLAICCMIFLGFADDVL) traverse the membrane as a helical segment. At 119-121 (NLR) the chain is on the cytoplasmic side. The helical transmembrane segment at 122–143 (WRHKLLLPTAASLPLLMVYFTN) threads the bilayer. Lys-125 is a binding site for dolichyl phosphate. Topologically, residues 144 to 166 (FGNTTIVVPKPFRWILGLHLDLG) are lumenal. An N-linked (GlcNAc...) asparagine glycan is attached at Asn-146. Residues 167 to 186 (ILYYVYMGLLAVFCTNAINI) form a helical membrane-spanning segment. 178 to 186 (VFCTNAINI) is a dolichyl phosphate binding site. Asn-185 provides a ligand contact to Mg(2+). Residues 187 to 192 (LAGING) lie on the Cytoplasmic side of the membrane. Asn-191 provides a ligand contact to UDP-N-acetyl-alpha-D-glucosamine. A helical transmembrane segment spans residues 193-213 (LEAGQSLVISASIIVFNLVEL). The Lumenal segment spans residues 214 to 218 (EGDYR). Residues 219-242 (DDHVFSLYFMIPFFFTTLGLLYHN) form a helical membrane-spanning segment. Over 243–250 (WYPSQVFV) the chain is Cytoplasmic. Residues 251 to 269 (GDTFCYFAGMTFAVVGILG) form a helical membrane-spanning segment. Asp-252 is a Mg(2+) binding site. Residues 270 to 271 (HF) are Lumenal-facing. A helical membrane pass occupies residues 272-293 (SKTMLLFFIPQVFNFLYSLPQL). The Cytoplasmic portion of the chain corresponds to 294–375 (LHAIPCPRHR…LLLKIFGPIH (82 aa)). 301–303 (RHR) serves as a coordination point for UDP-N-acetyl-alpha-D-glucosamine. Residues 376-400 (ERNLTLLLLLLQILSSAVTFSIRYQ) traverse the membrane as a helical segment. The Lumenal segment spans residues 401–408 (LVRLFYDV).

It belongs to the glycosyltransferase 4 family. As to quaternary structure, homodimer. Requires Mg(2+) as cofactor.

The protein resides in the endoplasmic reticulum membrane. It catalyses the reaction a di-trans,poly-cis-dolichyl phosphate + UDP-N-acetyl-alpha-D-glucosamine = an N-acetyl-alpha-D-glucosaminyl-diphospho-di-trans,poly-cis-dolichol + UMP. The protein operates within protein modification; protein glycosylation. Inhibited by natural nucleoside antibiotic tunicamycin, which acts as a structural analog and competitor of UDP-GlcNAc. Its function is as follows. UDP-N-acetylglucosamine--dolichyl-phosphate N-acetylglucosaminephosphotransferase that operates in the biosynthetic pathway of dolichol-linked oligosaccharides, the glycan precursors employed in protein asparagine (N)-glycosylation. The assembly of dolichol-linked oligosaccharides begins on the cytosolic side of the endoplasmic reticulum membrane and finishes in its lumen. The sequential addition of sugars to dolichol pyrophosphate produces dolichol-linked oligosaccharides containing fourteen sugars, including two GlcNAcs, nine mannoses and three glucoses. Once assembled, the oligosaccharide is transferred from the lipid to nascent proteins by oligosaccharyltransferases. Catalyzes the initial step of dolichol-linked oligosaccharide biosynthesis, transfering GlcNAc-1-P from cytosolic UDP-GlcNAc onto the carrier lipid dolichyl phosphate (P-dolichol), yielding GlcNAc-P-P-dolichol embedded in the cytoplasmic leaflet of the endoplasmic reticulum membrane. The sequence is that of UDP-N-acetylglucosamine--dolichyl-phosphate N-acetylglucosaminephosphotransferase (DPAGT1) from Cricetulus griseus (Chinese hamster).